The sequence spans 490 residues: Solute carrier family 2, facilitated glucose transporter member 1 (490 aa).

Over 1 to 10 the chain is Cytoplasmic; sequence MESGSKMTAR. A helical transmembrane segment spans residues 11–32; the sequence is LMLAVGGAVLGSLQFGYNTGVI. Topologically, residues 33 to 65 are extracellular; sequence NRPQKVIEDFYNHTWLYRYEEPISPATLTTLWS. N44 is a glycosylation site (N-linked (GlcNAc...) asparagine). Residues 66 to 86 traverse the membrane as a helical segment; the sequence is LSVAIFSVGGMIGSFSVGLFV. Residues 87-89 lie on the Cytoplasmic side of the membrane; the sequence is NRF. The helical transmembrane segment at 90-111 threads the bilayer; it reads GRRNSMLMSNILAFLAAVLMGF. The Extracellular portion of the chain corresponds to 112–119; it reads SKMALSFE. The chain crosses the membrane as a helical span at residues 120–143; sequence MLILGRFIIGLYSGLTTGFVPMYV. The Cytoplasmic segment spans residues 144–154; sequence GEVSPTALRGA. Residues 155–175 form a helical membrane-spanning segment; sequence LGTFHQLGIVLGILIAQVFGL. Q160 serves as a coordination point for D-glucose. Residues 176-184 are Extracellular-facing; that stretch reads DLIMGNDSL. Residues 185 to 205 traverse the membrane as a helical segment; sequence WPLLLGFIFVPALLQCIILPF. Over 206 to 270 the chain is Cytoplasmic; sequence APESPRFLLI…LFRSPMYRQP (65 aa). A helical membrane pass occupies residues 271–292; it reads ILIAIVLQLSQQLSGINAVFYY. Residues 281-282 and N287 each bind D-glucose; that span reads QQ. Residues 293-305 are Extracellular-facing; sequence STSIFEKSGVEQP. Residues 306-327 form a helical membrane-spanning segment; that stretch reads VYATIGSGVVNTAFTVVSLFVV. N316 is a binding site for D-glucose. Residues 328-333 lie on the Cytoplasmic side of the membrane; the sequence is ERAGRR. Residues 334 to 354 form a helical membrane-spanning segment; the sequence is TLHLIGLAGMAGCAILMTIAL. Residues 355 to 364 lie on the Extracellular side of the membrane; sequence TLLDQMPWMS. A helical membrane pass occupies residues 365 to 387; it reads YLSIVAIFGFVAFFEIGPGPIPW. Residues E379 and W387 each coordinate D-glucose. Topologically, residues 388–400 are cytoplasmic; sequence FIVAELFSQGPRP. The chain crosses the membrane as a helical span at residues 401–421; that stretch reads AAFAVAGLSNWTSNFIVGMGF. At 422–428 the chain is on the extracellular side; it reads QYIAQLC. The helical transmembrane segment at 429–449 threads the bilayer; that stretch reads GSYVFIIFTVLLVLFFIFTYF. At 450–490 the chain is on the cytoplasmic side; the sequence is KVPETKGRTFDEIAYRFRQGGASQSDKTPDEFHSLGADSQV. The tract at residues 470–490 is disordered; sequence GASQSDKTPDEFHSLGADSQV.

It belongs to the major facilitator superfamily. Sugar transporter (TC 2.A.1.1) family. Glucose transporter subfamily. Interacts with isoform 1 of BSG. Retinal cones (at protein level).

It is found in the cell membrane. The protein localises to the photoreceptor inner segment. The catalysed reaction is D-glucose(out) = D-glucose(in). Its function is as follows. Facilitative glucose transporter, which is responsible for constitutive or basal glucose uptake. Has a very broad substrate specificity; can transport a wide range of aldoses including both pentoses and hexoses. Most important energy carrier of the brain: present at the blood-brain barrier and assures the energy-independent, facilitative transport of glucose into the brain. In association with BSG and NXNL1, promotes retinal cone survival by increasing glucose uptake into photoreceptors. Required for mesendoderm differentiation. The sequence is that of Solute carrier family 2, facilitated glucose transporter member 1 from Gallus gallus (Chicken).